The sequence spans 187 residues: Potassium-transporting ATPase KdpC subunit (187 aa).

Residues 10–30 (LVAATMLICVAGYSAAVWAVG) form a helical membrane-spanning segment.

This sequence belongs to the KdpC family. The system is composed of three essential subunits: KdpA, KdpB and KdpC.

The protein localises to the cell inner membrane. Functionally, part of the high-affinity ATP-driven potassium transport (or Kdp) system, which catalyzes the hydrolysis of ATP coupled with the electrogenic transport of potassium into the cytoplasm. This subunit acts as a catalytic chaperone that increases the ATP-binding affinity of the ATP-hydrolyzing subunit KdpB by the formation of a transient KdpB/KdpC/ATP ternary complex. This is Potassium-transporting ATPase KdpC subunit from Parvibaculum lavamentivorans (strain DS-1 / DSM 13023 / NCIMB 13966).